We begin with the raw amino-acid sequence, 323 residues long: Putative HTH-type transcriptional regulatory protein Mbur_1811 (323 aa).

In terms of domain architecture, HTH cro/C1-type spans 132 to 190 (LKEARMNVSMSLGALASELGVSRRTISKYEEGQMDASIDIVLHLEEILDMALAKSIDIL). Residues 143–162 (LGALASELGVSRRTISKYEE) constitute a DNA-binding region (H-T-H motif).

The chain is Putative HTH-type transcriptional regulatory protein Mbur_1811 from Methanococcoides burtonii (strain DSM 6242 / NBRC 107633 / OCM 468 / ACE-M).